Reading from the N-terminus, the 36-residue chain is Kappa-actitoxin-Avd6a (36 aa).

The ShKT domain occupies 2–36 (CKDNFAAATCKHVKENKNCGSQKYATNCAKTCGKC). Intrachain disulfides connect Cys-2–Cys-36, Cys-11–Cys-29, and Cys-20–Cys-33. Residues 24 to 25 (KY) form a crucial for binding to potassium channels region.

Belongs to the sea anemone type 1 potassium channel toxin family. Type 1b subfamily.

It is found in the secreted. The protein localises to the nematocyst. Functionally, blocks voltage-gated potassium channels Kv1.2/KCNA2 (IC(50)=140 nM). The protein is Kappa-actitoxin-Avd6a of Anemonia sulcata (Mediterranean snakelocks sea anemone).